A 483-amino-acid polypeptide reads, in one-letter code: Serine/threonine-protein phosphatase 2A regulatory subunit phr2AB (483 aa).

WD repeat units lie at residues 22-61 and 88-129; these read SDAN…QSSK and EIEE…IKQV. A disordered region spans residues 132-152; sequence SATTTGPSYNGSLASNNTRSP. WD repeat units lie at residues 206–244, 255–295, 314–352, and 369–410; these read AHAY…ECFN, DLTE…LCDN, EIIS…KPVK, and ENDC…DVCL. The tract at residues 421–443 is disordered; that stretch reads TKTLTTKMKLRSSKKEPKKPEDI. Basic and acidic residues predominate over residues 433-443; it reads SKKEPKKPEDI. The stretch at 449-483 is one WD 7 repeat; it reads EYTKKTLHCAWHPKDNLIAVGAANTVYLYAATENK.

The protein belongs to the phosphatase 2A regulatory subunit B family. In terms of assembly, PP2A consists of a trimeric holoenzyme, composed of a 37 kDa catalytic subunit (C subunit) and a 65 kDa constant regulatory subunit (A subunit), that associates with a variety of regulatory subunits (B subunit) such as phr2AB (B55) and psrA (B56 homolog). The trimer may partially dissociates into a core 'AC' dimer equally active compared to the trimer.

It is found in the cytoplasm. The protein resides in the cytosol. The protein localises to the cytoskeleton. It localises to the microtubule organizing center. Its subcellular location is the centrosome. The B regulatory subunit might modulate substrate selectivity and catalytic activity, and might also direct the localization of the catalytic enzyme to a particular subcellular compartment. The polypeptide is Serine/threonine-protein phosphatase 2A regulatory subunit phr2AB (phr2aB) (Dictyostelium discoideum (Social amoeba)).